We begin with the raw amino-acid sequence, 128 residues long: Mu-like prophage FluMu protein gp35 (128 aa).

The disordered stretch occupies residues 53-87 (TETGSQEGGEGLSKEPAGSDEQKQLRADPPSTDLN).

This sequence to phage Mu protein gp35. Monomer.

This is Mu-like prophage FluMu protein gp35 from Haemophilus influenzae (strain ATCC 51907 / DSM 11121 / KW20 / Rd).